The sequence spans 185 residues: Translation initiation factor IF-3 (185 aa).

This sequence belongs to the IF-3 family. As to quaternary structure, monomer.

It is found in the cytoplasm. IF-3 binds to the 30S ribosomal subunit and shifts the equilibrium between 70S ribosomes and their 50S and 30S subunits in favor of the free subunits, thus enhancing the availability of 30S subunits on which protein synthesis initiation begins. This Rickettsia typhi (strain ATCC VR-144 / Wilmington) protein is Translation initiation factor IF-3.